The following is a 165-amino-acid chain: Xanthine-guanine phosphoribosyltransferase (165 aa).

Residues 41 to 42 and 98 to 106 contribute to the 5-phospho-alpha-D-ribose 1-diphosphate site; these read RG and DDLTDTGKT. Aspartate 99 contributes to the Mg(2+) binding site. 2 residues coordinate guanine: aspartate 102 and isoleucine 145. Aspartate 102 and isoleucine 145 together coordinate xanthine. GMP contacts are provided by residues 102–106 and 144–145; these read DTGKT and WI.

It belongs to the purine/pyrimidine phosphoribosyltransferase family. XGPT subfamily. Homotetramer. It depends on Mg(2+) as a cofactor.

The protein resides in the cell inner membrane. It carries out the reaction GMP + diphosphate = guanine + 5-phospho-alpha-D-ribose 1-diphosphate. The enzyme catalyses XMP + diphosphate = xanthine + 5-phospho-alpha-D-ribose 1-diphosphate. The catalysed reaction is IMP + diphosphate = hypoxanthine + 5-phospho-alpha-D-ribose 1-diphosphate. Its pathway is purine metabolism; GMP biosynthesis via salvage pathway; GMP from guanine: step 1/1. It functions in the pathway purine metabolism; XMP biosynthesis via salvage pathway; XMP from xanthine: step 1/1. Functionally, purine salvage pathway enzyme that catalyzes the transfer of the ribosyl-5-phosphate group from 5-phospho-alpha-D-ribose 1-diphosphate (PRPP) to the N9 position of the 6-oxopurines guanine and xanthine to form the corresponding ribonucleotides GMP (guanosine 5'-monophosphate) and XMP (xanthosine 5'-monophosphate), with the release of PPi. To a lesser extent, also acts on hypoxanthine. This chain is Xanthine-guanine phosphoribosyltransferase, found in Brucella suis (strain ATCC 23445 / NCTC 10510).